We begin with the raw amino-acid sequence, 392 residues long: Protein-glutamate methylesterase/protein-glutamine glutaminase (392 aa).

A Response regulatory domain is found at 9–126; sequence TVLIVDDSPF…GADIQALARD (118 aa). Asp-60 carries the 4-aspartylphosphate modification. Positions 148-194 are disordered; it reads VSRISSASGSRPPWTAGAASENTNRLSSPGSTSSTLGSAKGRSLDSG. The segment covering 173 to 185 has biased composition (low complexity); the sequence is LSSPGSTSSTLGS. Residues 198-392 form the CheB-type methylesterase domain; the sequence is PKYPVEIVAI…RHIVECVQRR (195 aa). Active-site residues include Ser-210, His-237, and Asp-334.

This sequence belongs to the CheB family. Phosphorylated by CheA. Phosphorylation of the N-terminal regulatory domain activates the methylesterase activity.

It localises to the cytoplasm. The enzyme catalyses [protein]-L-glutamate 5-O-methyl ester + H2O = L-glutamyl-[protein] + methanol + H(+). The catalysed reaction is L-glutaminyl-[protein] + H2O = L-glutamyl-[protein] + NH4(+). Functionally, involved in chemotaxis. Part of a chemotaxis signal transduction system that modulates chemotaxis in response to various stimuli. Catalyzes the demethylation of specific methylglutamate residues introduced into the chemoreceptors (methyl-accepting chemotaxis proteins or MCP) by CheR. Also mediates the irreversible deamidation of specific glutamine residues to glutamic acid. The polypeptide is Protein-glutamate methylesterase/protein-glutamine glutaminase (Desulfitobacterium hafniense (strain Y51)).